A 243-amino-acid chain; its full sequence is MSTNPKPAFRRILLKLSGEALMGEEGFGIDPKVLDRMAQEVKELVELGIQVGVVIGGGNLFRGEGLAKAGMNRVVGDHMGMLATVMNGLAMRDALHRAYVNARLMSAIPLKGVCDDYNWAEAISLLKSGRVVIFAAGTGNPFCTTDSAACLRGIEIEAEVVLKGTKVDGVYSADPMKDPDAVKHDVLSYNEVLERELKVMDLAAFTLARDHNMPILVFNMNKPGALRRVIMGEEEGTYIKNLN.

K15–G18 is an ATP binding site. Residues G23–G28 form an involved in allosteric activation by GTP region. Residue G57 coordinates UMP. 2 residues coordinate ATP: G58 and R62. UMP contacts are provided by residues D77 and T138–T145. ATP is bound by residues T165, Y171, and D174.

Belongs to the UMP kinase family. In terms of assembly, homohexamer.

It is found in the cytoplasm. It catalyses the reaction UMP + ATP = UDP + ADP. Its pathway is pyrimidine metabolism; CTP biosynthesis via de novo pathway; UDP from UMP (UMPK route): step 1/1. With respect to regulation, allosterically activated by GTP. Inhibited by UTP. Catalyzes the reversible phosphorylation of UMP to UDP. The chain is Uridylate kinase from Shewanella denitrificans (strain OS217 / ATCC BAA-1090 / DSM 15013).